Reading from the N-terminus, the 193-residue chain is Holliday junction branch migration complex subunit RuvA (193 aa).

The segment at 1 to 64 (MIGRIAGVLL…EDAHLLYGFG (64 aa)) is domain I. The tract at residues 65-139 (TAEERSTFRE…GKIGADLGAM (75 aa)) is domain II. The segment at 139–143 (MAGAA) is flexible linker. The domain III stretch occupies residues 144 to 193 (SASDHASDILNALLALGYSEKEALAAVKNVPAGTGVSEGIKLALKALSKG).

The protein belongs to the RuvA family. As to quaternary structure, homotetramer. Forms an RuvA(8)-RuvB(12)-Holliday junction (HJ) complex. HJ DNA is sandwiched between 2 RuvA tetramers; dsDNA enters through RuvA and exits via RuvB. An RuvB hexamer assembles on each DNA strand where it exits the tetramer. Each RuvB hexamer is contacted by two RuvA subunits (via domain III) on 2 adjacent RuvB subunits; this complex drives branch migration. In the full resolvosome a probable DNA-RuvA(4)-RuvB(12)-RuvC(2) complex forms which resolves the HJ.

The protein resides in the cytoplasm. The RuvA-RuvB-RuvC complex processes Holliday junction (HJ) DNA during genetic recombination and DNA repair, while the RuvA-RuvB complex plays an important role in the rescue of blocked DNA replication forks via replication fork reversal (RFR). RuvA specifically binds to HJ cruciform DNA, conferring on it an open structure. The RuvB hexamer acts as an ATP-dependent pump, pulling dsDNA into and through the RuvAB complex. HJ branch migration allows RuvC to scan DNA until it finds its consensus sequence, where it cleaves and resolves the cruciform DNA. In Paraburkholderia xenovorans (strain LB400), this protein is Holliday junction branch migration complex subunit RuvA.